Reading from the N-terminus, the 268-residue chain is Ribosome maturation factor RimP (268 aa).

Disordered regions lie at residues 1-41 (MGSA…GRGG) and 223-268 (LVEP…EMTR). A compositionally biased stretch (low complexity) spans 32 to 41 (PSGSARGRGG). A compositionally biased stretch (basic and acidic residues) spans 248 to 257 (ESNDDGREAG).

It belongs to the RimP family.

It is found in the cytoplasm. Required for maturation of 30S ribosomal subunits. The protein is Ribosome maturation factor RimP of Frankia casuarinae (strain DSM 45818 / CECT 9043 / HFP020203 / CcI3).